Consider the following 240-residue polypeptide: MELSPNLKSNLNSEMNDLVQQAEEWAQSQHRSASPGALKDPKLCAIYKMILQNSALLLIEKSGVKTVEEFQKVFGPIIEEQKNKEDEIIEFEEFEEIEKARAELASPTSFTKYSMMLDEPLSASPFNRRRTSLFSDLHVLSPIASASSESFEKPKRFASSTQHAKKSFVTVESTRTPWRRSNSMYLEDVLNRTINTPLKSHSASRLNHLTPSPRPGETPLENRASRLRRMKIEEKMNENF.

Over residues 197 to 210 (PLKSHSASRLNHLT) the composition is skewed to polar residues. The disordered stretch occupies residues 197-222 (PLKSHSASRLNHLTPSPRPGETPLEN).

This is an uncharacterized protein from Caenorhabditis elegans.